The chain runs to 78 residues: Defensin SD2 (78 aa).

Positions 1-20 (MKSSMKMFAALLLVVMCLLA) are cleaved as a signal peptide. 4 cysteine pairs are disulfide-bonded: cysteine 34–cysteine 78, cysteine 45–cysteine 65, cysteine 51–cysteine 72, and cysteine 55–cysteine 74.

This sequence belongs to the DEFL family. In terms of tissue distribution, highest expression in flowers and to a lesser extent in leaves. Lower levels in hypocotyls. No expression in roots and cotyledons.

Its subcellular location is the secreted. It is found in the cell wall. May play a protective role in flowers by protecting the reproductive organs from potential pathogen attack. In Helianthus annuus (Common sunflower), this protein is Defensin SD2 (SD2).